Consider the following 29-residue polypeptide: Scolopendra 8011.73 Da toxin (29 aa).

Expressed by the venom gland.

It localises to the secreted. This is Scolopendra 8011.73 Da toxin from Scolopendra viridicornis nigra (Brazilian giant centipede).